The chain runs to 177 residues: Adenine phosphoribosyltransferase (177 aa).

This sequence belongs to the purine/pyrimidine phosphoribosyltransferase family. In terms of assembly, homodimer.

The protein resides in the cytoplasm. It carries out the reaction AMP + diphosphate = 5-phospho-alpha-D-ribose 1-diphosphate + adenine. The protein operates within purine metabolism; AMP biosynthesis via salvage pathway; AMP from adenine: step 1/1. Catalyzes a salvage reaction resulting in the formation of AMP, that is energically less costly than de novo synthesis. In Rhodococcus jostii (strain RHA1), this protein is Adenine phosphoribosyltransferase.